We begin with the raw amino-acid sequence, 322 residues long: Transcription factor IIIA (322 aa).

9 C2H2-type zinc fingers span residues phenylalanine 12–histidine 36, phenylalanine 42–histidine 64, tyrosine 70–histidine 95, tyrosine 102–histidine 126, phenylalanine 132–histidine 156, tyrosine 159–histidine 184, leucine 188–histidine 211, phenylalanine 218–histidine 243, and phenylalanine 249–histidine 273. The tract at residues valine 272–proline 322 is disordered. Over residues lysine 278–leucine 292 the composition is skewed to basic residues. A compositionally biased stretch (polar residues) spans serine 312 to proline 322.

The protein localises to the nucleus. Functionally, involved in ribosomal large subunit biogenesis. Interacts with the internal control region (ICR) of approximately 50 bases within the 5S RNA genes, is required for correct transcription of these genes by RNA polymerase III. Also binds the transcribed 5S RNA's. This is Transcription factor IIIA (gtf3a) from Ictalurus punctatus (Channel catfish).